Consider the following 149-residue polypeptide: C-type lectin domain family 2 member B (149 aa).

Topologically, residues 1–7 (MMTKHKK) are cytoplasmic. Residues 8–25 (CFIIVGVLITTNIITLIV) form a helical; Signal-anchor for type II membrane protein membrane-spanning segment. Topologically, residues 26–149 (KLTRDSQSLC…RKWICRKRIH (124 aa)) are extracellular. A disulfide bond links Cys-35 and Cys-46. The 104-residue stretch at 42–145 (FQNKCYYFSK…CYTERKWICR (104 aa)) folds into the C-type lectin domain. N-linked (GlcNAc...) asparagine glycans are attached at residues Asn-57, Asn-62, and Asn-100. 2 cysteine pairs are disulfide-bonded: Cys-63-Cys-144 and Cys-123-Cys-136.

As to quaternary structure, homodimer. Interacts with NKp80/KLRF1. Post-translationally, (Microbial infection) Ubiquitinated by human herpesvirus 8 protein K5, leading to endolysosomal degradation. In terms of processing, N-linked glycosylated; required to enable surface expression and the extent of surface expression correlates with the number of functional conventional N-glycosylation sites. In terms of tissue distribution, expressed preferentially in lymphoid tissues, and in most hematopoietic cell types.

The protein resides in the cell membrane. The protein localises to the golgi apparatus membrane. Its function is as follows. Membrane-bound protein expressed on myeloid cells which acts as a ligand to stimulate the activating receptor NKp80/KLRF1, expressed on the surface of natural killer (NK) cells. In turn, stimulates NK-cell cytotoxicity and cytokine production leading to the cytolysis of malignant CLEC2B-expressing myeloid cells. The protein is C-type lectin domain family 2 member B (CLEC2B) of Homo sapiens (Human).